The primary structure comprises 623 residues: AM-toxin biosynthesis protein 12-2 (623 aa).

The tract at residues T110 to L129 is disordered.

It functions in the pathway mycotoxin biosynthesis. In terms of biological role, part of the gene clusters that mediate the biosynthesis of AM-toxins, host-selective toxins (HSTs) causing Alternaria blotch on apple, a worldwide distributed disease. AM-toxins are cyclic depsipeptides containing the 3 residues 2-hydroxy-isovaleric acid (2-HIV), dehydroalanine, L-alanine which are common for all 3 AM-toxins I to III. The fourth precursor is L-alpha-amino-methoxyphenyl-valeric acid (L-Amv) for AM-toxin I, L-alpha-amino-phenyl-valeric acid (L-Apv) for AM-toxin II, and L-alpha-amino-hydroxyphenyl-valeric acid (L-Ahv) for AM-toxin III. AM-toxins have two target sites for affecting susceptible apple cells; they cause invagination of the plasma membrane and electrolyte loss and chloroplast disorganization. The non-ribosomal peptide synthetase AMT1 contains 4 catalytic modules and is responsible for activation of each residue in AM-toxin. The aldo-keto reductase AMT2 catalyzes the conversion of 2-keto-isovaleric acid (2-KIV) to 2-hydroxy-isovaleric acid (2-HIV), one of the precursor residues incorporated by AMT1 during AM-toxin biosynthesis, by reduction of its ketone to an alcohol. The cytochrome P450 monooxygenase AMT3 and the thioesterase AMT4 are also important for AM-toxin production, but their exact function within the AM-toxin biosynthesis are not known yet. Up to 21 proteins (including AMT1 to AMT4) are predicted to be involved in AM-toxin biosynthesis since their expression ishighly up-regulated in AM-toxin-producing cultures. The sequence is that of AM-toxin biosynthesis protein 12-2 from Alternaria alternata (Alternaria rot fungus).